Here is a 147-residue protein sequence, read N- to C-terminus: D-aminoacyl-tRNA deacylase (147 aa).

Residues 137 to 138 carry the Gly-cisPro motif, important for rejection of L-amino acids motif; that stretch reads GP.

The protein belongs to the DTD family. Homodimer.

The protein resides in the cytoplasm. It catalyses the reaction glycyl-tRNA(Ala) + H2O = tRNA(Ala) + glycine + H(+). The enzyme catalyses a D-aminoacyl-tRNA + H2O = a tRNA + a D-alpha-amino acid + H(+). Functionally, an aminoacyl-tRNA editing enzyme that deacylates mischarged D-aminoacyl-tRNAs. Also deacylates mischarged glycyl-tRNA(Ala), protecting cells against glycine mischarging by AlaRS. Acts via tRNA-based rather than protein-based catalysis; rejects L-amino acids rather than detecting D-amino acids in the active site. By recycling D-aminoacyl-tRNA to D-amino acids and free tRNA molecules, this enzyme counteracts the toxicity associated with the formation of D-aminoacyl-tRNA entities in vivo and helps enforce protein L-homochirality. The protein is D-aminoacyl-tRNA deacylase of Levilactobacillus brevis (strain ATCC 367 / BCRC 12310 / CIP 105137 / JCM 1170 / LMG 11437 / NCIMB 947 / NCTC 947) (Lactobacillus brevis).